Reading from the N-terminus, the 227-residue chain is Ribonuclease 3 (227 aa).

The RNase III domain occupies 3–130 (TNAISKIIKY…LIGAIYLDGG (128 aa)). A Mg(2+)-binding site is contributed by Glu43. Residue Asp47 is part of the active site. The Mg(2+) site is built by Asn116 and Glu119. Glu119 is a catalytic residue. Positions 155–224 (DAKTILQEWA…ASLMLAKINY (70 aa)) constitute a DRBM domain.

This sequence belongs to the ribonuclease III family. Homodimer. Requires Mg(2+) as cofactor.

The protein localises to the cytoplasm. The catalysed reaction is Endonucleolytic cleavage to 5'-phosphomonoester.. Digests double-stranded RNA. Involved in the processing of primary rRNA transcript to yield the immediate precursors to the large and small rRNAs (23S and 16S). Processes some mRNAs, and tRNAs when they are encoded in the rRNA operon. Processes pre-crRNA and tracrRNA of type II CRISPR loci if present in the organism. In Ehrlichia ruminantium (strain Welgevonden), this protein is Ribonuclease 3.